The chain runs to 417 residues: Serine--tRNA ligase (417 aa).

L-serine is bound at residue 232-234; sequence TAE. Residues 263-265 and valine 279 each bind ATP; that span reads RRE. Glutamate 286 is a binding site for L-serine. 350–353 is an ATP binding site; sequence EISS. Serine 385 lines the L-serine pocket.

This sequence belongs to the class-II aminoacyl-tRNA synthetase family. Type-1 seryl-tRNA synthetase subfamily. Homodimer. The tRNA molecule binds across the dimer.

The protein localises to the cytoplasm. The catalysed reaction is tRNA(Ser) + L-serine + ATP = L-seryl-tRNA(Ser) + AMP + diphosphate + H(+). It carries out the reaction tRNA(Sec) + L-serine + ATP = L-seryl-tRNA(Sec) + AMP + diphosphate + H(+). It participates in aminoacyl-tRNA biosynthesis; selenocysteinyl-tRNA(Sec) biosynthesis; L-seryl-tRNA(Sec) from L-serine and tRNA(Sec): step 1/1. In terms of biological role, catalyzes the attachment of serine to tRNA(Ser). Is also able to aminoacylate tRNA(Sec) with serine, to form the misacylated tRNA L-seryl-tRNA(Sec), which will be further converted into selenocysteinyl-tRNA(Sec). This Leptospira borgpetersenii serovar Hardjo-bovis (strain JB197) protein is Serine--tRNA ligase.